The following is a 298-amino-acid chain: Lipoyl synthase (298 aa).

Cys40, Cys45, Cys51, Cys67, Cys71, Cys74, and Ser280 together coordinate [4Fe-4S] cluster. The region spanning 53–269 (AVRRTATFMI…KEIAMAKGFS (217 aa)) is the Radical SAM core domain.

The protein belongs to the radical SAM superfamily. Lipoyl synthase family. [4Fe-4S] cluster serves as cofactor.

The protein resides in the cytoplasm. The enzyme catalyses [[Fe-S] cluster scaffold protein carrying a second [4Fe-4S](2+) cluster] + N(6)-octanoyl-L-lysyl-[protein] + 2 oxidized [2Fe-2S]-[ferredoxin] + 2 S-adenosyl-L-methionine + 4 H(+) = [[Fe-S] cluster scaffold protein] + N(6)-[(R)-dihydrolipoyl]-L-lysyl-[protein] + 4 Fe(3+) + 2 hydrogen sulfide + 2 5'-deoxyadenosine + 2 L-methionine + 2 reduced [2Fe-2S]-[ferredoxin]. Its pathway is protein modification; protein lipoylation via endogenous pathway; protein N(6)-(lipoyl)lysine from octanoyl-[acyl-carrier-protein]. In terms of biological role, catalyzes the radical-mediated insertion of two sulfur atoms into the C-6 and C-8 positions of the octanoyl moiety bound to the lipoyl domains of lipoate-dependent enzymes, thereby converting the octanoylated domains into lipoylated derivatives. In Bacillus pumilus (strain SAFR-032), this protein is Lipoyl synthase.